The primary structure comprises 329 residues: Phenylalanine--tRNA ligase alpha subunit (329 aa).

Glu253 contacts Mg(2+).

This sequence belongs to the class-II aminoacyl-tRNA synthetase family. Phe-tRNA synthetase alpha subunit type 1 subfamily. In terms of assembly, tetramer of two alpha and two beta subunits. Requires Mg(2+) as cofactor.

It is found in the cytoplasm. The enzyme catalyses tRNA(Phe) + L-phenylalanine + ATP = L-phenylalanyl-tRNA(Phe) + AMP + diphosphate + H(+). The polypeptide is Phenylalanine--tRNA ligase alpha subunit (Teredinibacter turnerae (strain ATCC 39867 / T7901)).